A 90-amino-acid chain; its full sequence is Bombyxin B-12 (90 aa).

The first 20 residues, 1-20 (MMKTTIMFMLVVVISLTYSS), serve as a signal peptide directing secretion. Intrachain disulfides connect cysteine 30/cysteine 76, cysteine 42/cysteine 89, and cysteine 75/cysteine 80. Positions 49–67 (SGAQYAPYFWTRQYLGSRG) are cleaved as a propeptide — c peptide like.

This sequence belongs to the insulin family. Heterodimer of a B chain and an A chain linked by two disulfide bonds.

The protein localises to the secreted. Its function is as follows. Brain peptide responsible for activation of prothoracic glands to produce ecdysone in insects. This chain is Bombyxin B-12 (BBXB12), found in Bombyx mori (Silk moth).